The primary structure comprises 81 residues: Sulfur carrier protein TusA (81 aa).

Catalysis depends on Cys19, which acts as the Cysteine persulfide intermediate.

The protein belongs to the sulfur carrier protein TusA family.

Its subcellular location is the cytoplasm. Its function is as follows. Sulfur carrier protein which probably makes part of a sulfur-relay system. The sequence is that of Sulfur carrier protein TusA from Shewanella sediminis (strain HAW-EB3).